A 1549-amino-acid chain; its full sequence is Zinc finger MYM-type protein 4 (1549 aa).

Position 2 is an N-acetylalanine (alanine 2). Residues 83–108 are disordered; that stretch reads VVSSDNEDEQDCSSKDNLVSSVHTDG. Positions 97-106 are enriched in polar residues; it reads KDNLVSSVHT. A Phosphothreonine modification is found at threonine 106. Residues serine 109 and serine 121 each carry the phosphoserine modification. Residues lysine 139 and lysine 148 each participate in a glycyl lysine isopeptide (Lys-Gly) (interchain with G-Cter in SUMO2) cross-link. A Phosphoserine modification is found at serine 161. A Glycyl lysine isopeptide (Lys-Gly) (interchain with G-Cter in SUMO2) cross-link involves residue lysine 195. A Phosphoserine modification is found at serine 197. Residues lysine 201 and lysine 232 each participate in a glycyl lysine isopeptide (Lys-Gly) (interchain with G-Cter in SUMO2) cross-link. Position 242 is a phosphoserine (serine 242). Residue lysine 250 forms a Glycyl lysine isopeptide (Lys-Gly) (interchain with G-Cter in SUMO1); alternate linkage. Lysine 250 is covalently cross-linked (Glycyl lysine isopeptide (Lys-Gly) (interchain with G-Cter in SUMO2); alternate). The disordered stretch occupies residues 267 to 291; it reads GLLDRVKDEPDNAQEYSHGQQQKTQ. Residues lysine 273, lysine 289, lysine 327, lysine 400, lysine 428, and lysine 430 each participate in a glycyl lysine isopeptide (Lys-Gly) (interchain with G-Cter in SUMO2) cross-link. A compositionally biased stretch (polar residues) spans 280 to 290; that stretch reads QEYSHGQQQKT. 9 MYM-type zinc fingers span residues 362 to 402, 414 to 457, 464 to 499, 510 to 544, 554 to 592, 600 to 631, 708 to 742, 749 to 788, and 795 to 829; these read QLFC…PKDV, KDFC…RHEV, HKLC…GSGQ, KKFC…AEMI, ELFC…QYHL, RNFC…LSQG, FQFC…KETV, KSFC…LIQN, and EDFC…SESL. Glycyl lysine isopeptide (Lys-Gly) (interchain with G-Cter in SUMO2) cross-links involve residues lysine 1035 and lysine 1062. 2 positions are modified to phosphoserine: serine 1065 and serine 1072. Glycyl lysine isopeptide (Lys-Gly) (interchain with G-Cter in SUMO2) cross-links involve residues lysine 1081 and lysine 1128. The interval 1124–1185 is disordered; the sequence is DSELKPFSKG…RRGRKKSVVP (62 aa). Residues 1125-1135 are compositionally biased toward basic and acidic residues; sequence SELKPFSKGET. Residues 1161 to 1182 show a composition bias toward basic residues; the sequence is SRTRRRHRDGFPQPRRRGRKKS. Residues serine 1182 and serine 1257 each carry the phosphoserine modification. Residue lysine 1432 forms a Glycyl lysine isopeptide (Lys-Gly) (interchain with G-Cter in SUMO2) linkage. A phosphoserine mark is found at serine 1540, serine 1543, and serine 1548.

Functionally, plays a role in the regulation of cell morphology and cytoskeletal organization. The protein is Zinc finger MYM-type protein 4 (Zmym4) of Mus musculus (Mouse).